A 430-amino-acid polypeptide reads, in one-letter code: Enolase (430 aa).

Residue glutamine 167 participates in (2R)-2-phosphoglycerate binding. Glutamate 209 (proton donor) is an active-site residue. The Mg(2+) site is built by aspartate 246, glutamate 287, and aspartate 314. Residues lysine 339, arginine 368, serine 369, and lysine 390 each coordinate (2R)-2-phosphoglycerate. Lysine 339 acts as the Proton acceptor in catalysis.

Belongs to the enolase family. Mg(2+) is required as a cofactor.

The protein resides in the cytoplasm. The protein localises to the secreted. It is found in the cell surface. It catalyses the reaction (2R)-2-phosphoglycerate = phosphoenolpyruvate + H2O. It functions in the pathway carbohydrate degradation; glycolysis; pyruvate from D-glyceraldehyde 3-phosphate: step 4/5. In terms of biological role, catalyzes the reversible conversion of 2-phosphoglycerate (2-PG) into phosphoenolpyruvate (PEP). It is essential for the degradation of carbohydrates via glycolysis. This chain is Enolase, found in Prochlorococcus marinus (strain MIT 9515).